Here is a 519-residue protein sequence, read N- to C-terminus: MSENSTFSTEDSCNSSYKPHASNLRRAGKTCSWASYMTNSPTLIVMIGLPARGKTYVSKKLTRYLNWIGVPTKVFNLGVYRREAVKSYQSYDFFRHDNEEAMKIRKQCALVALEDVKAYFTEESGQIAVFDATNTTRERRDMILNFAKQNAFKVFFVESVCDDPDVIAANILEVKVSSPDYPERNRENVMEDFLKRIECYKVTYQPLDPDNYDKDLSFIKVMNVGQRFLVNRVQDYIQSKIVYYLMNIHVHPRTIYLCRHGESEFNLLGKIGGDSGLSVRGKQFAHALKKFLEEQEIQDLKVWTSQLKRTIQTAESLGVTYEQWKILNEIDAGVCEEMTYSEIEQRYPEEFALRDQEKYLYRYPGGESYQDLVQRLEPVIMELERQGNILVISHQAVMRCLLAYFLDKGADELPYLRCPLHIIFKLTPVAYGCKVETITLNVDAVDTHRDKPTHNFPKSQTPVRMRRNSFTPLSSSNTIRRPRNYSVGSRPLKPLSPLRALDMQEGADQPKTQVSIPVV.

Residues 1 to 17 (MSENSTFSTEDSCNSSY) show a composition bias toward polar residues. The segment at 1–22 (MSENSTFSTEDSCNSSYKPHAS) is disordered. S2 bears the N-acetylserine mark. Residues 2–251 (SENSTFSTED…VYYLMNIHVH (250 aa)) form a 6-phosphofructo-2-kinase region. S32 is subject to Phosphoserine; by PKA. Residue 48–56 (GLPARGKTY) coordinates ATP. Beta-D-fructose 6-phosphate contacts are provided by R81 and R105. D131 is a catalytic residue. Residues T133 and R139 each contribute to the beta-D-fructose 6-phosphate site. C161 is a catalytic residue. 170–175 (NILEVK) contributes to the ATP binding site. Positions 175, 196, and 200 each coordinate beta-D-fructose 6-phosphate. The fructose-2,6-bisphosphatase stretch occupies residues 252–519 (PRTIYLCRHG…PKTQVSIPVV (268 aa)). R259 contributes to the beta-D-fructose 2,6-bisphosphate binding site. H260 acts as the Tele-phosphohistidine intermediate in catalysis. Residues N266 and G272 each contribute to the beta-D-fructose 2,6-bisphosphate site. E329 acts as the Proton donor/acceptor in catalysis. Beta-D-fructose 2,6-bisphosphate-binding residues include Y340, R354, K358, Y369, Q395, and R399. 351 to 354 (FALR) is a binding site for ATP. ATP-binding positions include 395–399 (QAVMR) and Y431. The segment at 448 to 493 (HRDKPTHNFPKSQTPVRMRRNSFTPLSSSNTIRRPRNYSVGSRPLK) is disordered. Over residues 456 to 479 (FPKSQTPVRMRRNSFTPLSSSNTI) the composition is skewed to polar residues. Residue S469 is modified to Phosphoserine. T471 carries the post-translational modification Phosphothreonine. T478 is subject to Phosphothreonine; by PKC. Phosphoserine is present on residues S486 and S496. The segment at 500–519 (ALDMQEGADQPKTQVSIPVV) is disordered. Positions 510 to 519 (PKTQVSIPVV) are enriched in polar residues.

This sequence in the C-terminal section; belongs to the phosphoglycerate mutase family. In terms of assembly, homodimer. Forms a heterodimer with PFKFB3. In terms of processing, phosphorylation by AMPK stimulates activity. As to expression, highest levels in kidney; also found in heart, brain, spleen, lung, liver, skeletal muscle and testis.

The catalysed reaction is beta-D-fructose 2,6-bisphosphate + H2O = beta-D-fructose 6-phosphate + phosphate. It carries out the reaction beta-D-fructose 6-phosphate + ATP = beta-D-fructose 2,6-bisphosphate + ADP + H(+). Its activity is regulated as follows. Phosphorylation results in the activation of the kinase activity. Synthesis and degradation of fructose 2,6-bisphosphate. The chain is 6-phosphofructo-2-kinase/fructose-2,6-bisphosphatase 2 (Pfkfb2) from Mus musculus (Mouse).